Here is a 115-residue protein sequence, read N- to C-terminus: MQQLIEEITKEQLRTDLPAFRPGDTLRVHVKVVEGTRERIQIFEGVVIKRRGGGISETFTVRKISYGVGVERTFPVHTPKIANIEVVRHGKVRRAKLYYLRELRGKAARIKEIRR.

The protein belongs to the bacterial ribosomal protein bL19 family.

In terms of biological role, this protein is located at the 30S-50S ribosomal subunit interface and may play a role in the structure and function of the aminoacyl-tRNA binding site. This chain is Large ribosomal subunit protein bL19, found in Bacillus pumilus (strain SAFR-032).